The following is a 609-amino-acid chain: MCGIVGAIAQRDVAEILLEGLRRLEYRGYDSAGLAVVDAEGHMTRLRRLGKVQMLAQAAEEHPLHGGTGIAHTRWATHGEPSEVNAHPHVSEHIVVVHNGIIENHEPLREELKARGYTFVSETDTEVIAHLVNWELKQGGTLREAVLRAIPQLRGAYGTVIMDSRHPDTLLAARSGSPLVIGLGMGENFIASDQLALLPVTRRFIFLEEGDIAEITRRSVNIFDKTGAEVKRQDIESNLQYDAGDKGIYRHYMQKEIYEQPNAIKNTLTGRISHGQVDLSELGPNADELLSKVEHIQILACGTSYNSGMVSRYWFESLAGIPCDVEIASEFRYRKSAVRRNSLMITLSQSGETADTLAGLRLSKELGYLGSLAICNVPGSSLVRESDLALMTNAGTEIGVASTKAFTTQLTVLLMLVAKLSRLKGLDASIEHDIVHGLQALPSRIEQMLSQDKRIEALAEDFSDKHHALFLGRGDQYPIALEGALKLKEISYIHAEAYAAGELKHGPLALIDADMPVIVVAPNNELLEKLKSNIEEVRARGGQLYVFAEQDAGFVSSDNMHIIEMPHVEEVIAPIFYTVPLQLLAYHVALIKGTDVDQPRNLAKSVTVE.

Residue Cys-2 is the Nucleophile; for GATase activity of the active site. The 217-residue stretch at 2-218 folds into the Glutamine amidotransferase type-2 domain; sequence CGIVGAIAQR…EGDIAEITRR (217 aa). SIS domains are found at residues 286 to 426 and 458 to 599; these read ADEL…LKGL and LAED…VDQP. The active-site For Fru-6P isomerization activity is the Lys-604.

Homodimer.

It localises to the cytoplasm. The catalysed reaction is D-fructose 6-phosphate + L-glutamine = D-glucosamine 6-phosphate + L-glutamate. Catalyzes the first step in hexosamine metabolism, converting fructose-6P into glucosamine-6P using glutamine as a nitrogen source. The polypeptide is Glutamine--fructose-6-phosphate aminotransferase [isomerizing] (Escherichia coli O157:H7).